Reading from the N-terminus, the 104-residue chain is DNA-directed RNA polymerase subunit omega (104 aa).

The disordered stretch occupies residues 76-104 (IEEEKRRKEEEEKKIKEQIAKEKEDGEKI).

Belongs to the RNA polymerase subunit omega family. The RNAP catalytic core consists of 2 alpha, 1 beta, 1 beta' and 1 omega subunit. When a sigma factor is associated with the core the holoenzyme is formed, which can initiate transcription.

The enzyme catalyses RNA(n) + a ribonucleoside 5'-triphosphate = RNA(n+1) + diphosphate. Promotes RNA polymerase assembly. Latches the N- and C-terminal regions of the beta' subunit thereby facilitating its interaction with the beta and alpha subunits. This Streptococcus pneumoniae (strain CGSP14) protein is DNA-directed RNA polymerase subunit omega.